The chain runs to 958 residues: UPF0182 protein TW644 (958 aa).

7 helical membrane passes run 14 to 34, 59 to 79, 107 to 127, 166 to 186, 205 to 225, 249 to 269, and 280 to 300; these read IAIL…FFLV, IFVV…LCMF, KIVV…FAAS, LFFL…ISVV, VQYA…FWLN, LIPG…LFCI, and IIGV…LPWG.

This sequence belongs to the UPF0182 family.

The protein resides in the cell membrane. This Tropheryma whipplei (strain TW08/27) (Whipple's bacillus) protein is UPF0182 protein TW644.